Here is a 290-residue protein sequence, read N- to C-terminus: Dual-specificity RNA pseudouridine synthase RluF (290 aa).

The S4 RNA-binding domain maps to 7–74; sequence VRLNKYISES…EDLVLIALNK (68 aa). 2 interaction with RNA regions span residues 105-108 and 187-190; these read RLDK and RQIR. Asp-107 functions as the Nucleophile in the catalytic mechanism. The interval 241–290 is disordered; sequence SEAKPKAKAKPKTVGIKRPVVKMEKTAEKGGRPASNGKRFTSPGRKKKGR. Residues 261–271 show a composition bias toward basic and acidic residues; sequence VKMEKTAEKGG.

It belongs to the pseudouridine synthase RsuA family. Monomer.

It catalyses the reaction uridine(2604) in 23S rRNA = pseudouridine(2604) in 23S rRNA. The enzyme catalyses uridine(35) in tRNA(Tyr) = pseudouridine(35) in tRNA(Tyr). Dual specificity enzyme that catalyzes the synthesis of pseudouridine from uracil-2604 in 23S ribosomal RNA and from uracil-35 in the anticodon of tRNA(Tyr). This is Dual-specificity RNA pseudouridine synthase RluF (rluF) from Escherichia coli O6:H1 (strain CFT073 / ATCC 700928 / UPEC).